A 314-amino-acid polypeptide reads, in one-letter code: Homoserine O-acetyltransferase (314 aa).

Cys-142 serves as the catalytic Acyl-thioester intermediate. Substrate-binding residues include Lys-163 and Ser-192. Catalysis depends on His-235, which acts as the Proton acceptor. The active site involves Glu-237. Position 249 (Arg-249) interacts with substrate.

It belongs to the MetA family.

The protein resides in the cytoplasm. It catalyses the reaction L-homoserine + acetyl-CoA = O-acetyl-L-homoserine + CoA. It functions in the pathway amino-acid biosynthesis; L-methionine biosynthesis via de novo pathway; O-acetyl-L-homoserine from L-homoserine: step 1/1. In terms of biological role, transfers an acetyl group from acetyl-CoA to L-homoserine, forming acetyl-L-homoserine. This Azobacteroides pseudotrichonymphae genomovar. CFP2 protein is Homoserine O-acetyltransferase.